The sequence spans 162 residues: MTQFLIVVATVLVMELTAYSVHRWIMHGPLGWGWHKSHHEEHDHALEKNDLYGVVFAVLATILFTVGAYWWPVLWWIALGMTVYGLIYFILHDGLVHQRWPFRYIPRRGYFRRLYQAHRLHHAVEGRDHCVSFGFIYAPPVDKLKQDLKRSGVLRPQDERPS.

The Fatty acid hydroxylase domain maps to 8–135 (VATVLVMELT…GRDHCVSFGF (128 aa)).

Belongs to the sterol desaturase family.

It carries out the reaction all-trans-beta-carotene + 4 reduced [2Fe-2S]-[ferredoxin] + 2 O2 + 4 H(+) = all-trans-zeaxanthin + 4 oxidized [2Fe-2S]-[ferredoxin] + 2 H2O. It functions in the pathway carotenoid biosynthesis; astaxanthin biosynthesis. Its function is as follows. Catalyzes the hydroxylation reaction from beta-carotene to zeaxanthin via beta-cryptoxanthin. This Paracoccus sp. (strain PC1) (Alcaligenes sp. (strain PC1)) protein is Beta-carotene hydroxylase (crtZ).